The chain runs to 173 residues: Pectinesterase inhibitor 2 (173 aa).

An N-terminal signal peptide occupies residues Met-1–Ala-25. Cys-34 and Cys-43 are oxidised to a cystine. Residues Asn-39 and Asn-63 are each glycosylated (N-linked (GlcNAc...) asparagine). The cysteines at positions 99 and 139 are disulfide-linked.

This sequence belongs to the PMEI family. As to quaternary structure, interacts with PPME1. In terms of tissue distribution, highest expression in flowers. Expressed exclusively at the pollen tube tip.

It is found in the secreted. It localises to the extracellular space. Its subcellular location is the apoplast. Functionally, inhibits pectin methylesterase (PME) from flowers, siliques and pollen tube. In Arabidopsis thaliana (Mouse-ear cress), this protein is Pectinesterase inhibitor 2.